The chain runs to 156 residues: Ribosomal RNA large subunit methyltransferase H (156 aa).

S-adenosyl-L-methionine-binding positions include Leu73, Gly104, and 123-128; that span reads LSALTL.

This sequence belongs to the RNA methyltransferase RlmH family. In terms of assembly, homodimer.

The protein localises to the cytoplasm. It catalyses the reaction pseudouridine(1915) in 23S rRNA + S-adenosyl-L-methionine = N(3)-methylpseudouridine(1915) in 23S rRNA + S-adenosyl-L-homocysteine + H(+). In terms of biological role, specifically methylates the pseudouridine at position 1915 (m3Psi1915) in 23S rRNA. This Erwinia tasmaniensis (strain DSM 17950 / CFBP 7177 / CIP 109463 / NCPPB 4357 / Et1/99) protein is Ribosomal RNA large subunit methyltransferase H.